The following is a 121-amino-acid chain: UPF0102 protein Xfasm12_1748 (121 aa).

This sequence belongs to the UPF0102 family.

This Xylella fastidiosa (strain M12) protein is UPF0102 protein Xfasm12_1748.